Reading from the N-terminus, the 489-residue chain is UDP-N-acetylmuramoyl-L-alanyl-D-glutamate--2,6-diaminopimelate ligase (489 aa).

Serine 30 contacts UDP-N-acetyl-alpha-D-muramoyl-L-alanyl-D-glutamate. Residue 108-114 (GTNGKTT) coordinates ATP. Residues asparagine 149, 150–151 (TT), serine 177, glutamine 183, and arginine 185 contribute to the UDP-N-acetyl-alpha-D-muramoyl-L-alanyl-D-glutamate site. Position 217 is an N6-carboxylysine (lysine 217). Residues arginine 383, 407–410 (DNPR), glycine 459, and glutamate 463 contribute to the meso-2,6-diaminopimelate site. Residues 407–410 (DNPR) carry the Meso-diaminopimelate recognition motif motif.

Belongs to the MurCDEF family. MurE subfamily. Requires Mg(2+) as cofactor. Carboxylation is probably crucial for Mg(2+) binding and, consequently, for the gamma-phosphate positioning of ATP.

The protein localises to the cytoplasm. It carries out the reaction UDP-N-acetyl-alpha-D-muramoyl-L-alanyl-D-glutamate + meso-2,6-diaminopimelate + ATP = UDP-N-acetyl-alpha-D-muramoyl-L-alanyl-gamma-D-glutamyl-meso-2,6-diaminopimelate + ADP + phosphate + H(+). The protein operates within cell wall biogenesis; peptidoglycan biosynthesis. Its function is as follows. Catalyzes the addition of meso-diaminopimelic acid to the nucleotide precursor UDP-N-acetylmuramoyl-L-alanyl-D-glutamate (UMAG) in the biosynthesis of bacterial cell-wall peptidoglycan. The sequence is that of UDP-N-acetylmuramoyl-L-alanyl-D-glutamate--2,6-diaminopimelate ligase from Geobacillus kaustophilus (strain HTA426).